We begin with the raw amino-acid sequence, 241 residues long: Ribosomal RNA small subunit methyltransferase G (241 aa).

Residues glycine 79, phenylalanine 84, 130-131 (AE), and arginine 150 each bind S-adenosyl-L-methionine.

It belongs to the methyltransferase superfamily. RNA methyltransferase RsmG family.

It is found in the cytoplasm. Specifically methylates the N7 position of a guanine in 16S rRNA. The protein is Ribosomal RNA small subunit methyltransferase G of Ligilactobacillus salivarius (strain UCC118) (Lactobacillus salivarius).